A 55-amino-acid chain; its full sequence is MKIFFAVLVILVLFSMLIWTAYGTPYPVNCKTDRDCVMCGLGISCKNGYCQSCTR.

The first 23 residues, 1-23 (MKIFFAVLVILVLFSMLIWTAYG), serve as a signal peptide directing secretion. 3 disulfides stabilise this stretch: cysteine 30–cysteine 45, cysteine 36–cysteine 50, and cysteine 39–cysteine 53.

Expressed by the venom gland.

Its subcellular location is the secreted. The sequence is that of Neurotoxin X-29S from Olivierus martensii (Manchurian scorpion).